The chain runs to 457 residues: Glycoprotein endo-alpha-1,2-mannosidase-like protein (457 aa).

Topologically, residues 1–8 (MARRRRRA) are cytoplasmic. The helical; Signal-anchor for type II membrane protein transmembrane segment at 9-29 (CIALFLVLLFAFGTLMGLRTL) threads the bilayer. The Lumenal portion of the chain corresponds to 30-457 (KAPDGLPALG…FIKEKEQWLM (428 aa)). The interval 46-93 (PFERRPEGAPAPAARAPAAPAAPPPPPPPPRTADPGGSPGPAPAEAEP) is disordered. Positions 53-64 (GAPAPAARAPAA) are enriched in low complexity. The segment covering 65–87 (PAAPPPPPPPPRTADPGGSPGPA) has biased composition (pro residues).

This sequence belongs to the glycosyl hydrolase 99 family.

It is found in the golgi apparatus membrane. In Homo sapiens (Human), this protein is Glycoprotein endo-alpha-1,2-mannosidase-like protein (MANEAL).